Reading from the N-terminus, the 847-residue chain is Protein SEY1 (847 aa).

Residues 1 to 720 are Cytoplasmic-facing; that stretch reads MSSGEPLSET…KRSIVQHVTQ (720 aa). The region spanning 55–290 is the GB1/RHD3-type G domain; it reads GHNYHIVAVF…VENDIFKPEY (236 aa). 65-72 serves as a coordination point for GTP; sequence GSQSTGKS. Residues 721–741 traverse the membrane as a helical segment; sequence IPYYIYIIILLLGWNEFMAVV. The Lumenal portion of the chain corresponds to 742–744; that stretch reads RNP. A helical membrane pass occupies residues 745–765; that stretch reads FTFSLAIILGASLYILYTMNL. Residues 766 to 847 lie on the Cytoplasmic side of the membrane; the sequence is LKPALTVTQR…VTSLNVVEEE (82 aa).

Belongs to the TRAFAC class dynamin-like GTPase superfamily. GB1/RHD3 GTPase family. RHD3 subfamily.

The protein resides in the endoplasmic reticulum membrane. Cooperates with the reticulon proteins and tubule-shaping DP1 family proteins to generate and maintain the structure of the tubular endoplasmic reticulum network. Has GTPase activity, which is required for its function in ER organization. The protein is Protein SEY1 of Lodderomyces elongisporus (strain ATCC 11503 / CBS 2605 / JCM 1781 / NBRC 1676 / NRRL YB-4239) (Yeast).